The sequence spans 342 residues: tRNA-specific 2-thiouridylase MnmA (342 aa).

Residues 6–13 and Leu-32 each bind ATP; that span reads LLSGGVDS. Cys-92 functions as the Nucleophile in the catalytic mechanism. A disulfide bond links Cys-92 and Cys-191. Residue Gly-116 coordinates ATP. Positions 138–140 are interaction with tRNA; sequence KDQ. Catalysis depends on Cys-191, which acts as the Cysteine persulfide intermediate. The interaction with tRNA stretch occupies residues 293 to 294; sequence RY.

Belongs to the MnmA/TRMU family.

The protein localises to the cytoplasm. It catalyses the reaction S-sulfanyl-L-cysteinyl-[protein] + uridine(34) in tRNA + AH2 + ATP = 2-thiouridine(34) in tRNA + L-cysteinyl-[protein] + A + AMP + diphosphate + H(+). Functionally, catalyzes the 2-thiolation of uridine at the wobble position (U34) of tRNA, leading to the formation of s(2)U34. In Helicobacter pylori (strain G27), this protein is tRNA-specific 2-thiouridylase MnmA.